An 891-amino-acid polypeptide reads, in one-letter code: UPF0182 protein Glov_0814 (891 aa).

Helical transmembrane passes span L6–Y26, G51–A71, I102–W122, F164–A184, I202–L222, T244–W264, and G266–M286.

The protein belongs to the UPF0182 family.

Its subcellular location is the cell membrane. In Trichlorobacter lovleyi (strain ATCC BAA-1151 / DSM 17278 / SZ) (Geobacter lovleyi), this protein is UPF0182 protein Glov_0814.